The sequence spans 492 residues: Vacuolar fusion protein CCZ1 homolog (492 aa).

The tract at residues 255-275 is disordered; that stretch reads SVHAGPTSSSSNGTASVERPL. Over residues 260-269 the composition is skewed to polar residues; sequence PTSSSSNGTA.

The protein belongs to the CCZ1 family. As to quaternary structure, interacts with MON1.

It localises to the endosome. It is found in the prevacuolar compartment. Functionally, plays an important role in membrane trafficking through the secretory apparatus. In complex with MON1, acts as a guanine exchange factor (GEF) for Rab7 protein family. Promotes the exchange of GDP to GTP, converting it from an inactive GDP-bound form into an active GTP-bound form. The active form is involved in protein trafficking from prevacuolar compartments (PVCs) to vacuoles. May serve as a linker between Rab5 and Rab7 protein families in PVCs and mediate PVC maturation. The sequence is that of Vacuolar fusion protein CCZ1 homolog from Oryza sativa subsp. japonica (Rice).